A 498-amino-acid chain; its full sequence is Ammonium transporter 1 member 3 (498 aa).

11 helical membrane-spanning segments follow: residues 41 to 61, 76 to 96, 122 to 142, 150 to 170, 194 to 214, 238 to 258, 277 to 299, 307 to 327, 329 to 349, 362 to 382, and 414 to 434; these read LLFS…LCAG, VLDA…FAFG, FFLF…GSIA, YLIY…HWFW, FAGS…GAFI, LVVL…PGSF, AVGR…TLYG, WNVT…TAGC, VVDP…LIGC, LEAT…TALF, and IVQI…LFYV. The tract at residues 473–498 is disordered; that stretch reads RAKSAAETARVEPRKSPEQAAAGQFV.

The protein belongs to the ammonia transporter channel (TC 1.A.11.2) family. As to expression, expressed in roots.

It is found in the membrane. Functionally, ammonium transporter probably involved in ammonium uptake from the soil. The sequence is that of Ammonium transporter 1 member 3 (AMT1-3) from Oryza sativa subsp. japonica (Rice).